Reading from the N-terminus, the 487-residue chain is Protein DETOXIFICATION 10 (487 aa).

12 consecutive transmembrane segments (helical) span residues 35–55 (LICF…IQII), 73–93 (FAVS…SCAL), 122–142 (LVCL…VILG), 155–175 (AAWL…IRYF), 184–204 (LLVT…LLVY), 211–231 (IGGA…LGSF), 264–284 (AAML…SGLL), 293–313 (VLSI…AIAA), 333–353 (IVVY…SMSL), 377–397 (MAPL…LSGV), 412–432 (FGAF…WVHL), and 435–455 (VGLW…LALV).

Belongs to the multi antimicrobial extrusion (MATE) (TC 2.A.66.1) family.

The protein localises to the membrane. The chain is Protein DETOXIFICATION 10 from Arabidopsis thaliana (Mouse-ear cress).